A 134-amino-acid polypeptide reads, in one-letter code: Phosphoribosyl-ATP pyrophosphatase 2 (134 aa).

Belongs to the PRA-PH family.

Its subcellular location is the cytoplasm. The catalysed reaction is 1-(5-phospho-beta-D-ribosyl)-ATP + H2O = 1-(5-phospho-beta-D-ribosyl)-5'-AMP + diphosphate + H(+). The protein operates within amino-acid biosynthesis; L-histidine biosynthesis; L-histidine from 5-phospho-alpha-D-ribose 1-diphosphate: step 2/9. This is Phosphoribosyl-ATP pyrophosphatase 2 (hisE2) from Bradyrhizobium diazoefficiens (strain JCM 10833 / BCRC 13528 / IAM 13628 / NBRC 14792 / USDA 110).